The sequence spans 514 residues: Ubiquitin carboxyl-terminal hydrolase 22 (514 aa).

A UBP-type zinc finger spans residues proline 10–methionine 127. Zn(2+)-binding residues include cysteine 12, histidine 14, cysteine 52, cysteine 55, cysteine 65, cysteine 68, cysteine 73, histidine 78, histidine 82, histidine 88, cysteine 101, and cysteine 104. Lysine 118 bears the N6-acetyllysine mark. Threonine 136 bears the Phosphothreonine mark. The 345-residue stretch at arginine 165 to glutamine 509 folds into the USP domain. Cysteine 174 serves as the catalytic Nucleophile. Serine 226 is subject to Phosphoserine. The active-site Proton acceptor is histidine 468.

This sequence belongs to the peptidase C19 family. UBP8 subfamily. As to quaternary structure, component of some SAGA transcription coactivator-HAT complexes, at least composed of ATXN7, ATXN7L3, ENY2, GCN5L2, SUPT3H, TAF10, TRRAP and USP22. Within the SAGA complex, ATXN7L3, ENY2 and USP22 form a subcomplex required for histone deubiquitination. Interacts directly with ATXN7L3; leading to its recruitment to the SAGA complex. Interacts with ATXN7L3 and weakly with ATXN7L3B. Interacts with MED1. In terms of processing, phosphorylated in G2/M phase, but not in G1 phase by CDK1. Ubiquitinated and subsequently degraded in a CDC20-dependent manner.

The protein localises to the nucleus. The protein resides in the cytoplasm. It catalyses the reaction Thiol-dependent hydrolysis of ester, thioester, amide, peptide and isopeptide bonds formed by the C-terminal Gly of ubiquitin (a 76-residue protein attached to proteins as an intracellular targeting signal).. Functionally, deubiquitinase that plays a role in several cellular processes including transcriptional regulation, cell cycle progression or innate immunity. As part of the transcription regulatory histone acetylation (HAT) complex SAGA, catalyzes the deubiquitination of both histones H2A and H2B, thereby acting as a transcriptional coactivator. Recruited to specific gene promoters by activators such as MYC, where it is required for transcription. Facilitates cell-cycle progression by stabilizing CCNB1 and antagonizing its proteasome-mediated degradation in a cell cycle-specific manner. Modulates cell cycle progression and apoptosis also by antagonizing TP53 transcriptional activation through deacetylase SIRT1 stabilization. Plays multiple roles in immunity and inflammation. Participates in antiviral response by deubiquitinating the importin KPNA2, leading to IRF3 nuclear translocation and subsequent type I interferon production. Acts as a central regulator of type III IFN signaling by negatively regulating STING1 activation and ubiquitination. Inhibits NLRP3 inflammasome activation by promoting NLRP3 degradation through ATG5-dependent autophagy. Deubiquitinates CD274 to induce its stabilization and thereby participates in maintenance of immune tolerance to self. Controls necroptotic cell death by regulating RIPK3 phosphorylation and ubiquitination. During bacterial infection, promotes pro-inflammatory response by targeting TRAF6 and removing its 'Lys-48'-linked polyubiquitination. This Bos taurus (Bovine) protein is Ubiquitin carboxyl-terminal hydrolase 22 (USP22).